A 392-amino-acid polypeptide reads, in one-letter code: MGLLRGGAACARAMARLGALRSHYCALLLAAALAVCAFYYLGSGRETFSSATKRLKEARAGAAAPTPPAPELARGSAAPASGAKAKSLEGGVVVPVDYHLLMMFTKAEHNAPLQAKARVALSSLLRLAKFEAHEVLNLHFVSEEASREVAKALLRELLPPAAGFKCKVIFHDVAVLTDKLFPVVEAMQKYFSAGSGTYYSDSIFFLSVAMHQIMPKEIPRIIQLDLDLKYKTNIRELFEEFDNFLPGAVIGIAREMQPVYRHTFWQFRHENPKTRVGDPPPEGLPGFNSGVMLLNLEAMRQSPLYSHLLEPSWVQQLADKYHFRGHLGDQDFFTMIGMEHPELFHVLDCTWNRQLCTWWRDHGYSDVFQAYFRCEGHVKIYHGNCNTPIPED.

The Cytoplasmic segment spans residues 1-19 (MGLLRGGAACARAMARLGA). A helical; Signal-anchor for type II membrane protein membrane pass occupies residues 20–42 (LRSHYCALLLAAALAVCAFYYLG). Over 43 to 392 (SGRETFSSAT…GNCNTPIPED (350 aa)) the chain is Lumenal. 103–105 (MFT) contributes to the UDP-alpha-D-xylose binding site. Asp225 is a Mn(2+) binding site. Residue Leu226 coordinates UDP-alpha-D-xylose. Residue Asp227 participates in Mn(2+) binding. Residues 262 to 265 (HTFW) are interaction with target proteins. Residues Ser289, Leu327, and Gln330 each coordinate UDP-alpha-D-xylose. Gln330 and Trp359 together coordinate a glycoprotein. 2 cysteine pairs are disulfide-bonded: Cys349–Cys374 and Cys356–Cys385. His382 lines the Mn(2+) pocket. Residue Asn384 participates in a glycoprotein binding.

It belongs to the glycosyltransferase 8 family. Homodimer. Dimer formation may be essential for the retention in endoplasmic reticulum. The cofactor is Mg(2+). Mn(2+) serves as cofactor.

The protein localises to the endoplasmic reticulum membrane. It catalyses the reaction 3-O-[alpha-D-xylosyl-(1-&gt;3)-beta-D-glucosyl]-L-seryl-[EGF-like domain protein] + UDP-alpha-D-xylose = 3-O-[alpha-D-xylosyl-(1-&gt;3)-alpha-D-xylosyl-(1-&gt;3)-beta-D-glucosyl]-L-seryl-[EGF-like domain protein] + UDP + H(+). Functionally, alpha-1,3-xylosyltransferase, which elongates the O-linked xylose-glucose disaccharide attached to EGF-like repeats in the extracellular domain of target proteins by catalyzing the addition of the second xylose. Known targets include Notch proteins and coagulation factors, such as F9. The chain is Xyloside xylosyltransferase 1 (Xxylt1) from Mus musculus (Mouse).